We begin with the raw amino-acid sequence, 538 residues long: Prickle planar cell polarity protein 3-A (538 aa).

The PET domain occupies 66 to 175 (SGSQRDSLCE…CVRPVSGTMS (110 aa)). 3 consecutive LIM zinc-binding domains span residues 177–241 (TVCQ…ELKR), 242–302 (PRCL…LYAQ), and 305–366 (DSCG…NATP). The span at 369-378 (SFSPSQTDLS) shows a compositional bias: polar residues. Disordered stretches follow at residues 369 to 398 (SFSP…DGDS), 433 to 463 (RGAP…TRVT), and 475 to 538 (SVSL…CLLS). Basic and acidic residues predominate over residues 435–449 (APKEFSRECPNRRSL). Over residues 451–463 (DLNSHTRTPTRVT) the composition is skewed to polar residues. 2 stretches are compositionally biased toward low complexity: residues 475 to 488 (SVSL…SSSS) and 514 to 523 (APPTHAPTST).

This sequence belongs to the prickle / espinas / testin family. As to quaternary structure, interacts with vangl2 via its C-terminus. The vangl2-dependent membrane recruitment of prickle3 is a prerequisite for its polarization. Interacts with wtip. Wtip is involved in the recruitment of prickle3 to the basal body. In terms of tissue distribution, predominantly expressed in the epidermal ectoderm.

The protein localises to the cytoplasm. Its subcellular location is the cell membrane. The protein resides in the mitochondrion. Its function is as follows. Involved in the planar cell polarity (PCP) pathway that is essential for the polarization of epithelial cells during morphogenetic processes, including gastrulation and neurulation. PCP is maintained by two molecular modules, the global and the core modules. Proteins of the core module include the proteins Frizzled (Fz), Disheveled (Dsh), Van Gogh (Vang), Prickle (Pk), Flamingo (Fmi, Celsr) and Diego (Dgo). The core module proteins develop subcellular asymmetry, accumulating in two groups on opposite sides of epithelial cells. Distinct proximal (Vang, Pk and Fmi) and distal (Fz, Dsh, Dgo and Fmi) complexes segregate to opposite sides of the cell, where they interact with the opposite complex in the neighboring cell at or near the adherents junctions. Directional information to orient polarization with respect to the tissue axes is provided by the global module which involves Wnt proteins. Involved in the organization of the basal body. Involved in cilia growth and positioning. Required for proper assembly, stability, and function of mitochondrial membrane ATP synthase (mitochondrial complex V). This Xenopus laevis (African clawed frog) protein is Prickle planar cell polarity protein 3-A (prickle3-a).